The primary structure comprises 600 residues: Zinc metalloproteinase-disintegrin-like cobrin (600 aa).

A signal peptide spans 1–8 (MIQLSWSS). Positions 9-179 (IILESGNVND…DEPIKKTSLL (171 aa)) are excised as a propeptide. Residues 193 to 388 (KYIEFYMVVD…DRPQCILNKP (196 aa)) enclose the Peptidase M12B domain. Positions 196 and 280 each coordinate Ca(2+). Disulfide bonds link Cys304–Cys383, Cys344–Cys367, and Cys346–Cys351. Zn(2+) is bound by residues His329, His333, and His339. Residues Cys383, Asn386, Ile398, Asn401, Phe403, Glu405, Glu408, and Asp411 each contribute to the Ca(2+) site. Residues 396–482 (PPICGNYFVE…ECPTDVFQRN (87 aa)) enclose the Disintegrin domain. Intrachain disulfides connect Cys399/Cys428, Cys410/Cys423, Cys412/Cys418, Cys422/Cys445, Cys436/Cys442, Cys441/Cys467, Cys454/Cys474, Cys461/Cys492, Cys486/Cys497, Cys504/Cys554, Cys519/Cys562, Cys532/Cys542, Cys549/Cys588, and Cys582/Cys593. The N-linked (GlcNAc...) asparagine glycan is linked to Asn424. Positions 460 to 462 (DCD) match the D/ECD-tripeptide motif. 5 residues coordinate Ca(2+): Asp462, Leu463, Glu465, Asp477, and Val478.

It belongs to the venom metalloproteinase (M12B) family. P-III subfamily. P-IIIa sub-subfamily. Monomer. Requires Zn(2+) as cofactor. In terms of tissue distribution, expressed by the venom gland.

The protein localises to the secreted. Functionally, snake venom zinc metalloproteinase that may cleave complement protein C3 into C3c-like (C3o). In Naja kaouthia (Monocled cobra), this protein is Zinc metalloproteinase-disintegrin-like cobrin.